Here is a 372-residue protein sequence, read N- to C-terminus: NAD(P)H-quinone oxidoreductase subunit 1 (372 aa).

Transmembrane regions (helical) follow at residues 27–47 (MLWLPFPMLLVLVAAVVGVLV), 97–117 (ILFTLGPVLVVVPVILSWLIV), 128–148 (VGVGIFLWISLSSVQPIGLLM), 166–186 (AAQSISYEIPLALAVLAVVMM), 204–224 (VLSWNIWRQPVGFLIFWICAL), 266–286 (VLSALLVSILYLGGWGFPIPV), 308–328 (TVGIVMTVLKAYLLVFIAILL), and 347–367 (FLLPLALVNLLVTAALKLAFP).

Belongs to the complex I subunit 1 family. In terms of assembly, NDH-1 is composed of at least 11 different subunits.

It is found in the cellular thylakoid membrane. It catalyses the reaction a plastoquinone + NADH + (n+1) H(+)(in) = a plastoquinol + NAD(+) + n H(+)(out). The catalysed reaction is a plastoquinone + NADPH + (n+1) H(+)(in) = a plastoquinol + NADP(+) + n H(+)(out). NDH-1 shuttles electrons from an unknown electron donor, via FMN and iron-sulfur (Fe-S) centers, to quinones in the respiratory and/or the photosynthetic chain. The immediate electron acceptor for the enzyme in this species is believed to be plastoquinone. Couples the redox reaction to proton translocation, and thus conserves the redox energy in a proton gradient. The protein is NAD(P)H-quinone oxidoreductase subunit 1 of Synechococcus sp. (strain CC9311).